An 84-amino-acid polypeptide reads, in one-letter code: Small ribosomal subunit protein uS17c (84 aa).

It belongs to the universal ribosomal protein uS17 family. Part of the 30S ribosomal subunit.

It is found in the plastid. It localises to the chloroplast. Functionally, one of the primary rRNA binding proteins, it binds specifically to the 5'-end of 16S ribosomal RNA. The polypeptide is Small ribosomal subunit protein uS17c (rps17) (Thalassiosira pseudonana (Marine diatom)).